Here is a 145-residue protein sequence, read N- to C-terminus: UPF0735 ACT domain-containing protein CLL_A2896 (145 aa).

The ACT domain maps to 69–144 (TFNLIVKDQT…YVEKIEFVAM (76 aa)).

Belongs to the UPF0735 family.

The protein is UPF0735 ACT domain-containing protein CLL_A2896 of Clostridium botulinum (strain Eklund 17B / Type B).